Here is a 213-residue protein sequence, read N- to C-terminus: Thymidylate kinase (213 aa).

G10–T17 contributes to the ATP binding site.

The protein belongs to the thymidylate kinase family.

It carries out the reaction dTMP + ATP = dTDP + ADP. Phosphorylation of dTMP to form dTDP in both de novo and salvage pathways of dTTP synthesis. In Salmonella dublin (strain CT_02021853), this protein is Thymidylate kinase.